The primary structure comprises 2422 residues: Non-reducing polyketide synthase trt4 (2422 aa).

The segment at 14 to 196 (VLFGPKCPKT…HHSDHTSVVQ (183 aa)) is N-terminal acylcarrier protein transacylase domain (SAT). The disordered stretch occupies residues 289 to 314 (VEPPDSHHNTNTTQDSDVTTNASPLT). Polar residues predominate over residues 297-312 (NTNTTQDSDVTTNASP). The region spanning 329 to 745 (TVPIAVTGMA…GSNAAIVLQE (417 aa)) is the Ketosynthase family 3 (KS3) domain. Residues cysteine 494, histidine 629, and histidine 668 each act as for beta-ketoacyl synthase activity in the active site. The malonyl-CoA:ACP transacylase (MAT) domain stretch occupies residues 856-1121 (LCFGGQTGNT…CPIDLSGPQA (266 aa)). The active-site For acyl/malonyl transferase activity is the serine 904. The segment at 1190 to 1316 (PSLVKLLNND…GKISISSEAN (127 aa)) is N-terminal hotdog fold. Positions 1190-1495 (PSLVKLLNND…FTCVSIQSLK (306 aa)) constitute a PKS/mFAS DH domain. The segment at 1191 to 1494 (SLVKLLNNDG…TFTCVSIQSL (304 aa)) is product template (PT) domain. Catalysis depends on histidine 1221, which acts as the Proton acceptor; for dehydratase activity. Residues 1345–1495 (SSGLKRSTVY…FTCVSIQSLK (151 aa)) are C-terminal hotdog fold. Residue aspartate 1402 is the Proton donor; for dehydratase activity of the active site. One can recognise a Carrier domain in the interval 1535–1612 (SRSEDGLRVV…GLVQRIFPGG (78 aa)). Position 1572 is an O-(pantetheine 4'-phosphoryl)serine (serine 1572). Residues 1615–1636 (AHVETHSQPPDKIGITTGDRMP) are disordered. Residues 1774-2007 (QHASEHKLLH…GFNWVDWTDN (234 aa)) form a methyltransferase (CMeT) domain region. The segment at 2036 to 2383 (NAVAEETLVY…LAPHIPTDEY (348 aa)) is thioesterase (TE) domain. Residues serine 2159, aspartate 2320, and histidine 2352 each act as for thioesterase activity in the active site.

It catalyses the reaction 3 malonyl-CoA + acetyl-CoA + 2 S-adenosyl-L-methionine = 3,5-dimethylorsellinate + 2 S-adenosyl-L-homocysteine + 3 CO2 + 4 CoA. The protein operates within secondary metabolite biosynthesis; terpenoid biosynthesis. Its function is as follows. Non-reducing polyketide synthase; part of the gene cluster that mediates the biosynthesis of terretonin, a fungal meroterpenoid that acts as a mycotoxin. The first step of the pathway is the synthesis of 3,5-dimethylorsellinic acid (DMOA) by the polyketide synthase trt4. DMOA is then prenylated into farnesyl-DMOA by the polyprenyl transferase trt2. Methylation by the methyltransferase trt5 then leads to farnesyl-DMOA methyl ester which is further subject to epoxidation by the FAD-dependent monooxygenase trt8 to yield epoxyfarnesyl-DMOA methyl ester. Cyclization of epoxyfarnesyl-DMOA methyl ester by the terpene cyclase trt1 leads to a tetracycle intermediate which is in turn converted to preterretonin. Dehydrogenase trt9 comes next to transform preterretonin to preterrenoid. The FAD-dependent monooxygenase trt3 is then required for the C-hydroxylation at C16 of preterrenoid to yield terrenoid. The cytochrome P450 trt6 catalyzes three successive oxidations to transform terrenoid into an unstable intermediate, which then undergoes the D-ring expansion and unusual rearrangement of the methoxy group to afford the core skeleton of terretonin. Trt14 catalyzes the D-ring expansion of terretonin involving intramolecular methoxy rearrangement as well as the hydrolysis of the expanded D-ring and the methyl ester moiety. Finally, the nonheme iron-dependent dioxygenase trt7 accomplishes the last two oxidation reactions steps to complete the biosynthesis of terretonin. Terretonin C is produced via spontaneous decarboxylation of the terretonin precursor. Another shunt product of the terretonin biosynthesis is dihydrofarnesyl-DMOA, derived from epoxyfarnesyl-DMOA through hydrolysis of the epoxide. This is Non-reducing polyketide synthase trt4 from Aspergillus terreus (strain NIH 2624 / FGSC A1156).